We begin with the raw amino-acid sequence, 391 residues long: Elongation factor Tu (391 aa).

The tr-type G domain maps to 10–201 (KPHVNIGTIG…AVDEFIPTPE (192 aa)). Residues 19–26 (GHVDHGKT) form a G1 region. A GTP-binding site is contributed by 19-26 (GHVDHGKT). T26 is a Mg(2+) binding site. The G2 stretch occupies residues 55–59 (GITIS). The segment at 76 to 79 (DCPG) is G3. GTP is bound by residues 76–80 (DCPGH) and 131–134 (NKVD). The tract at residues 131-134 (NKVD) is G4. Residues 169 to 171 (SAL) form a G5 region.

Belongs to the TRAFAC class translation factor GTPase superfamily. Classic translation factor GTPase family. EF-Tu/EF-1A subfamily. As to quaternary structure, monomer.

The protein localises to the cytoplasm. The catalysed reaction is GTP + H2O = GDP + phosphate + H(+). GTP hydrolase that promotes the GTP-dependent binding of aminoacyl-tRNA to the A-site of ribosomes during protein biosynthesis. This chain is Elongation factor Tu, found in Roseobacter denitrificans (strain ATCC 33942 / OCh 114) (Erythrobacter sp. (strain OCh 114)).